A 355-amino-acid polypeptide reads, in one-letter code: 3-isopropylmalate dehydrogenase (355 aa).

Positions 90, 100, 128, and 222 each coordinate substrate. Mg(2+) is bound by residues aspartate 222, aspartate 246, and aspartate 250. 280–292 provides a ligand contact to NAD(+); that stretch reads GSAPDIAGKGIAN.

It belongs to the isocitrate and isopropylmalate dehydrogenases family. LeuB type 1 subfamily. Homodimer. It depends on Mg(2+) as a cofactor. Mn(2+) serves as cofactor.

The protein resides in the cytoplasm. It carries out the reaction (2R,3S)-3-isopropylmalate + NAD(+) = 4-methyl-2-oxopentanoate + CO2 + NADH. It participates in amino-acid biosynthesis; L-leucine biosynthesis; L-leucine from 3-methyl-2-oxobutanoate: step 3/4. Functionally, catalyzes the oxidation of 3-carboxy-2-hydroxy-4-methylpentanoate (3-isopropylmalate) to 3-carboxy-4-methyl-2-oxopentanoate. The product decarboxylates to 4-methyl-2 oxopentanoate. In Burkholderia multivorans (strain ATCC 17616 / 249), this protein is 3-isopropylmalate dehydrogenase.